The chain runs to 429 residues: 3-phosphoshikimate 1-carboxyvinyltransferase (429 aa).

Residues Lys23, Ser24, and Arg28 each coordinate 3-phosphoshikimate. Lys23 contributes to the phosphoenolpyruvate binding site. The phosphoenolpyruvate site is built by Gly95 and Arg123. Residues Ser168, Gln170, Asp316, and Lys343 each contribute to the 3-phosphoshikimate site. Position 170 (Gln170) interacts with phosphoenolpyruvate. Catalysis depends on Asp316, which acts as the Proton acceptor. The phosphoenolpyruvate site is built by Arg347 and Arg389.

The protein belongs to the EPSP synthase family. In terms of assembly, monomer.

Its subcellular location is the cytoplasm. It carries out the reaction 3-phosphoshikimate + phosphoenolpyruvate = 5-O-(1-carboxyvinyl)-3-phosphoshikimate + phosphate. It functions in the pathway metabolic intermediate biosynthesis; chorismate biosynthesis; chorismate from D-erythrose 4-phosphate and phosphoenolpyruvate: step 6/7. Functionally, catalyzes the transfer of the enolpyruvyl moiety of phosphoenolpyruvate (PEP) to the 5-hydroxyl of shikimate-3-phosphate (S3P) to produce enolpyruvyl shikimate-3-phosphate and inorganic phosphate. The sequence is that of 3-phosphoshikimate 1-carboxyvinyltransferase from Bacillus cereus (strain ZK / E33L).